Here is a 187-residue protein sequence, read N- to C-terminus: ECF RNA polymerase sigma factor SigK (187 aa).

Positions 30–96 (YDHTCTRVYG…RAVDRVRAEQ (67 aa)) are sigma-70 factor domain-2. An Interaction with polymerase core subunit RpoC motif is present at residues 53–56 (ETTQ). The interval 133 to 182 (CLDGLTDTQRQCIELAYYGGLTYAEVSQRLATNLSTIKSRMRDALRGLRN) is sigma-70 factor domain-4. Residues 155–174 (YAEVSQRLATNLSTIKSRMR) constitute a DNA-binding region (H-T-H motif).

It belongs to the sigma-70 factor family. ECF subfamily. Interacts transiently with the RNA polymerase catalytic core formed by RpoA, RpoB, RpoC and RpoZ (2 alpha, 1 beta, 1 beta' and 1 omega subunit) to form the RNA polymerase holoenzyme that can initiate transcription. Interacts (via sigma-70 factor domain 4) with anti-sigma-K factor RskA.

Its function is as follows. Sigma factors are initiation factors that promote the attachment of RNA polymerase to specific initiation sites and are then released. Extracytoplasmic function (ECF) sigma factors are held in an inactive form by an anti-sigma factor until released by regulated intramembrane proteolysis. The chain is ECF RNA polymerase sigma factor SigK (sigK) from Mycobacterium ulcerans (strain Agy99).